Consider the following 425-residue polypeptide: Serine--tRNA ligase (425 aa).

Thr230–Glu232 contacts L-serine. Residue Arg261–Glu263 participates in ATP binding. Glu284 is an L-serine binding site. Glu348–Ser351 contributes to the ATP binding site. Ser384 serves as a coordination point for L-serine.

Belongs to the class-II aminoacyl-tRNA synthetase family. Type-1 seryl-tRNA synthetase subfamily. In terms of assembly, homodimer. The tRNA molecule binds across the dimer.

The protein resides in the cytoplasm. The catalysed reaction is tRNA(Ser) + L-serine + ATP = L-seryl-tRNA(Ser) + AMP + diphosphate + H(+). The enzyme catalyses tRNA(Sec) + L-serine + ATP = L-seryl-tRNA(Sec) + AMP + diphosphate + H(+). It participates in aminoacyl-tRNA biosynthesis; selenocysteinyl-tRNA(Sec) biosynthesis; L-seryl-tRNA(Sec) from L-serine and tRNA(Sec): step 1/1. Functionally, catalyzes the attachment of serine to tRNA(Ser). Is also able to aminoacylate tRNA(Sec) with serine, to form the misacylated tRNA L-seryl-tRNA(Sec), which will be further converted into selenocysteinyl-tRNA(Sec). The sequence is that of Serine--tRNA ligase from Streptococcus agalactiae serotype Ia (strain ATCC 27591 / A909 / CDC SS700).